The following is a 225-amino-acid chain: Putative O-phosphotransferase MT2714 (225 aa).

An ATP-binding site is contributed by 30-37; that stretch reads GGSSAGKT.

The protein to S.violaceus chloramphenicol 3-O phosphotransferase.

This chain is Putative O-phosphotransferase MT2714, found in Mycobacterium tuberculosis (strain CDC 1551 / Oshkosh).